Reading from the N-terminus, the 422-residue chain is Serine hydroxymethyltransferase (422 aa).

(6S)-5,6,7,8-tetrahydrofolate is bound by residues Leu-118 and 122–124 (GHL). Lys-227 is subject to N6-(pyridoxal phosphate)lysine. (6S)-5,6,7,8-tetrahydrofolate-binding positions include Glu-243 and 351-353 (SPF).

Belongs to the SHMT family. In terms of assembly, homodimer. Pyridoxal 5'-phosphate is required as a cofactor.

It is found in the cytoplasm. The catalysed reaction is (6R)-5,10-methylene-5,6,7,8-tetrahydrofolate + glycine + H2O = (6S)-5,6,7,8-tetrahydrofolate + L-serine. Its pathway is one-carbon metabolism; tetrahydrofolate interconversion. It participates in amino-acid biosynthesis; glycine biosynthesis; glycine from L-serine: step 1/1. Catalyzes the reversible interconversion of serine and glycine with tetrahydrofolate (THF) serving as the one-carbon carrier. This reaction serves as the major source of one-carbon groups required for the biosynthesis of purines, thymidylate, methionine, and other important biomolecules. Also exhibits THF-independent aldolase activity toward beta-hydroxyamino acids, producing glycine and aldehydes, via a retro-aldol mechanism. The sequence is that of Serine hydroxymethyltransferase from Fervidobacterium nodosum (strain ATCC 35602 / DSM 5306 / Rt17-B1).